The chain runs to 147 residues: Angiogenin (147 aa).

The first 24 residues, 1–24 (MVILLGPLLLVFMLGLGLAPLSLA), serve as a signal peptide directing secretion. The Proton acceptor role is filled by His-37. Residues Arg-45 and Asp-46 each contribute to the tRNA site. 3 disulfides stabilise this stretch: Cys-50–Cys-104, Cys-63–Cys-115, and Cys-81–Cys-130. Positions 55–59 (KQRGL) match the Nucleolar localization signal motif. TRNA-binding residues include Cys-104 and Ile-126. The active-site Proton donor is His-137.

Belongs to the pancreatic ribonuclease family. Homodimer. Interacts with RNH1; inhibiting ANG ribonuclease activity. Interacts with PCNA.

Its subcellular location is the secreted. It localises to the nucleus. The protein resides in the nucleolus. The protein localises to the cytoplasm. It is found in the stress granule. Its activity is regulated as follows. Has weak tRNA ribonuclease activity by itself due to partial autoinhibition by its C-terminus, which folds into a short alpha-helix that partially occludes the substrate-binding site. In absence of stress, the ribonuclease activity is inhibited by RNH1 in the cytoplasm. In response to stress, dissociates from RNH1 in the cytoplasm and associates with cytoplasmic ribosomes with vacant A-sites: ribosomes directly activate the tRNA ribonuclease activity of ANG by refolding the C-terminal alpha-helix. In response to stress, the angiogenic activity of ANG is inhibited by RNH1 in the nucleus. Its function is as follows. Secreted ribonuclease that can either promote or restrict cell proliferation of target cells, depending on the context. Endocytosed in target cells via its receptor PLXNB2 and translocates to the cytoplasm or nucleus. Under stress conditions, localizes to the cytoplasm and promotes the assembly of stress granules (SGs): specifically cleaves a subset of tRNAs within anticodon loops to produce tRNA-derived stress-induced fragments (tiRNAs), resulting in translation repression and inhibition of cell proliferation. tiRNas also prevent formation of apoptosome, thereby promoting cell survival. Preferentially cleaves RNAs between a pyrimidine and an adenosine residue, suggesting that it cleaves the anticodon loop of tRNA(Ala) (32-UUAGCAU-38) after positions 33 and 36. Cleaves a subset of tRNAs, including tRNA(Ala), tRNA(Glu), tRNA(Gly), tRNA(Lys), tRNA(Val), tRNA(His), tRNA(Asp) and tRNA(Sec). Under growth conditions and in differentiated cells, translocates to the nucleus and stimulates ribosomal RNA (rRNA) transcription, including that containing the initiation site sequences of 45S rRNA, thereby promoting cell growth and proliferation. Angiogenin induces vascularization of normal and malignant tissues via its ability to promote rRNA transcription. Involved in hematopoietic stem and progenitor cell (HSPC) growth and survival by promoting rRNA transcription in growth conditions and inhibiting translation in response to stress, respectively. Mediates the crosstalk between myeloid and intestinal epithelial cells to protect the intestinal epithelial barrier integrity: secreted by myeloid cells and promotes intestinal epithelial cells proliferation and survival. Also mediates osteoclast-endothelial cell crosstalk in growing bone: produced by osteoclasts and protects the neighboring vascular cells against senescence by promoting rRNA transcription. This chain is Angiogenin (ANG), found in Sus scrofa (Pig).